The sequence spans 300 residues: Protein ARMCX6 (300 aa).

The Mitochondrial intermembrane portion of the chain corresponds to 1–6; the sequence is MGRARE. Mitochondrion outer membrane (MOM)-targeting sequence regions lie at residues 1–6 and 26–36; these read MGRARE and KLTIGRDDSEK. A helical; Signal-anchor transmembrane segment spans residues 7-27; it reads VGWMAAGLMIGAGACYCVYKL. The Cytoplasmic portion of the chain corresponds to 28 to 300; sequence TIGRDDSEKL…REILLETPAP (273 aa). 2 disordered regions span residues 35-54 and 69-99; these read EKLE…LDEE and WTED…RAHP.

The protein belongs to the eutherian X-chromosome-specific Armcx family.

The protein localises to the mitochondrion. It localises to the mitochondrion outer membrane. Its function is as follows. May regulate the dynamics and distribution of mitochondria in neural cells. The chain is Protein ARMCX6 (ARMCX6) from Homo sapiens (Human).